Reading from the N-terminus, the 487-residue chain is FIVLVICLSCLISFFLWNQNRAKGKLPPGPTPLPIIGNILQINTKNVSKSLSKLAENYGPVFTVYFGMKPTVVLYGYEAVKEALIDRSEEFSGRGHFPLLDWTIQGLGIVFSNGEKWKQTRRFSLTVLRNMGMGKKTVEDRIQEEALYLVEALKKTNASPCDPTFLLGCAPCNVICSIIFQNRFEYDDKDFLTLLEYFHENLLISSTSWIQLYNAFPLLIHYLPGSHHVLFKNIANQFKFISEKIKEHEESLNFSNPRDFIDYFLIKIEKEKHNKQSEFTMDNLIITIWDVFSAGTETTSTTLRYGLLVLLKHPDVTAKVQEEIHRVVGRHRSPCMQDRSCMPYTDAVVHEIQRYIDLVPNNLPHSVTQDIKFREYLIPKGTTILTSLTSVLHDEKGFPNPDQFDPGHFLDENGSFKKSDYFMAFSAGKRVCVGEGLARMELFLLLTNILQHFTLKPLVDPKDIDTTPIANGLGATPPSYKLCFVPV.

Position 432 (C432) interacts with heme.

The protein belongs to the cytochrome P450 family. Heme serves as cofactor. In terms of tissue distribution, liver.

It localises to the endoplasmic reticulum membrane. The protein resides in the microsome membrane. It catalyses the reaction an organic molecule + reduced [NADPH--hemoprotein reductase] + O2 = an alcohol + oxidized [NADPH--hemoprotein reductase] + H2O + H(+). Its function is as follows. Cytochromes P450 are a group of heme-thiolate monooxygenases. In liver microsomes, this enzyme is involved in an NADPH-dependent electron transport pathway. It oxidizes a variety of structurally unrelated compounds, including steroids, fatty acids, and xenobiotics. Showed testosterone hydrolase activity. In Canis lupus familiaris (Dog), this protein is Cytochrome P450 2C21 (CYP2C21).